Here is a 584-residue protein sequence, read N- to C-terminus: Protein spire homolog 1 (584 aa).

Residues 1–30 (MANTVEADGSNDEGYEAAEEGPEDEEDEKR) form a disordered region. Residues 1-73 (MANTVEADGS…RALFAETMEL (73 aa)) form the KIND domain. Over residues 9-28 (GSNDEGYEAAEEGPEDEEDE) the composition is skewed to acidic residues. A coiled-coil region spans residues 71–99 (MELHTFLAKVKSAKENLKKIQEMEKSDES). WH2 domains follow at residues 147–165 (PYEM…LRKV) and 211–228 (LHER…LRPV). Basic and acidic residues predominate over residues 224–238 (KLRPVSPEEIRRSRL). Residues 224 to 366 (KLRPVSPEEI…PTNVRQFLPP (143 aa)) are disordered. S229 is modified (phosphoserine). The span at 242–272 (TPESTKNLMESSMVNGGLTSQTKENGLSSAE) shows a compositional bias: polar residues. A phosphoserine mark is found at S292, S293, and S295. The segment covering 302 to 320 (KSTSSSSVSPSFPEEPVLE) has biased composition (low complexity). T337 is modified (phosphothreonine). Residues 340–356 (PERRQPPQRRHSIEKET) show a composition bias toward basic and acidic residues. The span at 357–366 (PTNVRQFLPP) shows a compositional bias: polar residues. Residues 384 to 404 (LALTVEEVMHIRQVLVKAELE) are spir-box. Phosphoserine occurs at positions 506, 510, and 563.

This sequence belongs to the spire family. As to quaternary structure, interacts with FMN2.

It localises to the cytoplasm. Its subcellular location is the cytoskeleton. The protein localises to the cytosol. It is found in the cleavage furrow. The protein resides in the perinuclear region. It localises to the cell membrane. Its subcellular location is the cytoplasmic vesicle membrane. Acts as an actin nucleation factor, remains associated with the slow-growing pointed end of the new filament. Involved in intracellular vesicle transport along actin fibers, providing a novel link between actin cytoskeleton dynamics and intracellular transport. Required for asymmetric spindle positioning and asymmetric cell division during meiosis. Required for normal formation of the cleavage furrow and for polar body extrusion during female germ cell meiosis. Also acts in the nucleus: together with FMN2, promotes assembly of nuclear actin filaments in response to DNA damage in order to facilitate movement of chromatin and repair factors after DNA damage. In addition, promotes innate immune signaling downstream of dsRNA sensing. Mechanistically, contributes to IRF3 phosphorylation and activation downstream of MAVS and upstream of TBK1. This is Protein spire homolog 1 (SPIRE1) from Macaca fascicularis (Crab-eating macaque).